The primary structure comprises 96 residues: uncharacterized protein (96 aa).

The N-terminal stretch at 1 to 19 (MKFLSALLLIVLLISVVFG) is a signal peptide. The N-linked (GlcNAc...) asparagine glycan is linked to Asn-20. Low complexity predominate over residues 27–46 (AWATTTTGGTTGSQTSPATH). The disordered stretch occupies residues 27–58 (AWATTTTGGTTGSQTSPATHGGHGGNGGNGHS). Residues 47 to 56 (GGHGGNGGNG) are compositionally biased toward gly residues.

The protein resides in the secreted. This is an uncharacterized protein from Dictyostelium discoideum (Social amoeba).